We begin with the raw amino-acid sequence, 213 residues long: Cytidylate kinase (213 aa).

ATP is bound at residue glycine 9–threonine 17.

The protein belongs to the cytidylate kinase family. Type 1 subfamily.

It localises to the cytoplasm. The catalysed reaction is CMP + ATP = CDP + ADP. It carries out the reaction dCMP + ATP = dCDP + ADP. This chain is Cytidylate kinase, found in Caulobacter vibrioides (strain ATCC 19089 / CIP 103742 / CB 15) (Caulobacter crescentus).